Here is a 221-residue protein sequence, read N- to C-terminus: Thiamine-phosphate synthase (221 aa).

4-amino-2-methyl-5-(diphosphooxymethyl)pyrimidine contacts are provided by residues 41–45 (QLRDK) and Asn82. Positions 83 and 102 each coordinate Mg(2+). Position 120 (Ser120) interacts with 4-amino-2-methyl-5-(diphosphooxymethyl)pyrimidine. 146 to 148 (TPT) provides a ligand contact to 2-[(2R,5Z)-2-carboxy-4-methylthiazol-5(2H)-ylidene]ethyl phosphate. 4-amino-2-methyl-5-(diphosphooxymethyl)pyrimidine is bound at residue Lys149. Residue Gly177 coordinates 2-[(2R,5Z)-2-carboxy-4-methylthiazol-5(2H)-ylidene]ethyl phosphate.

It belongs to the thiamine-phosphate synthase family. It depends on Mg(2+) as a cofactor.

It catalyses the reaction 2-[(2R,5Z)-2-carboxy-4-methylthiazol-5(2H)-ylidene]ethyl phosphate + 4-amino-2-methyl-5-(diphosphooxymethyl)pyrimidine + 2 H(+) = thiamine phosphate + CO2 + diphosphate. The enzyme catalyses 2-(2-carboxy-4-methylthiazol-5-yl)ethyl phosphate + 4-amino-2-methyl-5-(diphosphooxymethyl)pyrimidine + 2 H(+) = thiamine phosphate + CO2 + diphosphate. It carries out the reaction 4-methyl-5-(2-phosphooxyethyl)-thiazole + 4-amino-2-methyl-5-(diphosphooxymethyl)pyrimidine + H(+) = thiamine phosphate + diphosphate. It functions in the pathway cofactor biosynthesis; thiamine diphosphate biosynthesis; thiamine phosphate from 4-amino-2-methyl-5-diphosphomethylpyrimidine and 4-methyl-5-(2-phosphoethyl)-thiazole: step 1/1. Functionally, condenses 4-methyl-5-(beta-hydroxyethyl)thiazole monophosphate (THZ-P) and 2-methyl-4-amino-5-hydroxymethyl pyrimidine pyrophosphate (HMP-PP) to form thiamine monophosphate (TMP). In Mycolicibacterium vanbaalenii (strain DSM 7251 / JCM 13017 / BCRC 16820 / KCTC 9966 / NRRL B-24157 / PYR-1) (Mycobacterium vanbaalenii), this protein is Thiamine-phosphate synthase.